Here is a 251-residue protein sequence, read N- to C-terminus: Lactose phosphotransferase system repressor (251 aa).

One can recognise an HTH deoR-type domain in the interval 3-58 (KEERLEEITKLINKRGTIRVTEVVERLKVSDMTVRRDLTELEGLGVLTRIHGGARS). The H-T-H motif DNA-binding region spans 20–39 (IRVTEVVERLKVSDMTVRRD).

In terms of biological role, repressor of the lactose catabolism operon. Galactose-6-phosphate is the inducer. The protein is Lactose phosphotransferase system repressor (lacR) of Streptococcus mutans serotype c (strain ATCC 700610 / UA159).